Consider the following 501-residue polypeptide: Carboxypeptidase 1 (501 aa).

The region spanning 3-496 (IHTYEKEFFD…LIDYLSNKYS (494 aa)) is the Peptidase M32 domain. The short motif at 234–236 (HPF) is the HPF element. The DXRXT motif lies at 244–248 (DVRVT). Histidine 265 is a Zn(2+) binding site. An HEXXH motif is present at residues 265-269 (HECGH). Glutamate 266 serves as the catalytic Proton donor/acceptor. Zn(2+) is bound by residues histidine 269 and glutamate 295. An HES/GQ motif is present at residues 294–297 (HESQ). Residues 347-352 (IRVEAD) carry the I/NRXXA/SD motif. Residues 402–409 (GILQDVHW) carry the GXXQDXHW motif.

This sequence belongs to the peptidase M32 family. Homodimer. The cofactor is Zn(2+).

It carries out the reaction Release of a C-terminal amino acid with broad specificity, except for -Pro.. Broad specificity carboxypetidase that releases amino acids sequentially from the C-terminus, including neutral, aromatic, polar and basic residues. Has lower activity with substrates ending with His or Trp. The sequence is that of Carboxypeptidase 1 (ypwA) from Bacillus subtilis (strain 168).